We begin with the raw amino-acid sequence, 406 residues long: Glycosylated lysosomal membrane protein (406 aa).

A signal peptide spans methionine 1–glycine 35. Topologically, residues glutamate 36–glycine 372 are lumenal. Asparagine 65, asparagine 134, asparagine 159, asparagine 187, and asparagine 230 each carry an N-linked (GlcNAc...) asparagine glycan. Residues isoleucine 373–leucine 393 form a helical membrane-spanning segment. Topologically, residues leucine 394–asparagine 406 are cytoplasmic. The Lysosomal targeting motif signature appears at tyrosine 402–asparagine 406.

Belongs to the GLMP family. In terms of assembly, interacts (via lumenal domain) with lysosomal protein MFSD1; the interaction starts while both proteins are still in the endoplasmic reticulum and is required for stabilization of MFSD1 in lysosomes but has no direct effect on its targeting to lysosomes or transporter activity. Post-translationally, highly N-glycosylated. N-glycosylation is essential for GLMP stability and for MFSD1 lysosomal localization.

It is found in the lysosome membrane. Required to protect lysosomal transporter MFSD1 from lysosomal proteolysis and for MFSD1 lysosomal localization. This is Glycosylated lysosomal membrane protein from Homo sapiens (Human).